The sequence spans 107 residues: Glutaredoxin 4 (107 aa).

The Glutaredoxin domain maps to 4 to 106 (LDKIKKQISE…TLLAEVAAKH (103 aa)). Residue Lys-21 participates in glutathione binding. Cys-29 lines the [2Fe-2S] cluster pocket. Residues Arg-58, Phe-70, and 83–84 (CD) each bind glutathione.

Belongs to the glutaredoxin family. Monothiol subfamily. As to quaternary structure, homodimer.

Its subcellular location is the cytoplasm. Its function is as follows. Monothiol glutaredoxin involved in the biogenesis of iron-sulfur clusters. The sequence is that of Glutaredoxin 4 (grxD) from Haemophilus influenzae (strain 86-028NP).